A 142-amino-acid chain; its full sequence is Large ribosomal subunit protein uL13 (142 aa).

Belongs to the universal ribosomal protein uL13 family. As to quaternary structure, part of the 50S ribosomal subunit.

Functionally, this protein is one of the early assembly proteins of the 50S ribosomal subunit, although it is not seen to bind rRNA by itself. It is important during the early stages of 50S assembly. The sequence is that of Large ribosomal subunit protein uL13 from Xylella fastidiosa (strain M23).